The primary structure comprises 307 residues: Cytochrome c1 2, heme protein, mitochondrial (307 aa).

A mitochondrion-targeting transit peptide spans 1–64 (MVGGGVIRQL…LLSFSTVASA (64 aa)). The Mitochondrial intermembrane segment spans residues 65-270 (DEAEHGLECP…EPEMEERKLM (206 aa)). The Cytochrome c domain maps to 90 to 197 (ASIRRGHQVY…NGQNYVFALL (108 aa)). Cys103, Cys106, His107, and Met226 together coordinate heme c. A helical transmembrane segment spans residues 271–288 (GFKWIFLLSLALLQAAYY). At 289-307 (RRLKWSVLKSRKLVLDVVN) the chain is on the mitochondrial matrix side.

Belongs to the cytochrome c family. Component of the ubiquinol-cytochrome c oxidoreductase (cytochrome b-c1 complex, complex III, CIII), a multisubunit enzyme composed of 10 subunits. The complex is composed of 3 respiratory subunits cytochrome b (MT-CYB), cytochrome c1 (CYC1-1 or CYC1-2) and Rieske protein (UCR1-1 or UCR1-2), 2 core protein subunits MPPalpha1 (or MPPalpha2) and MPPB, and 5 low-molecular weight protein subunits QCR7-1 (or QCR7-2), UCRQ-1 (or UCRQ-2), QCR9, UCRY and probably QCR6-1 (or QCR6-2). The complex exists as an obligatory dimer and forms supercomplexes (SCs) in the inner mitochondrial membrane with NADH-ubiquinone oxidoreductase (complex I, CI), resulting in different assemblies (supercomplexes SCI(1)III(2) and SCI(2)III(4)). Post-translationally, binds 1 heme c group covalently per subunit.

The protein localises to the mitochondrion inner membrane. Component of the ubiquinol-cytochrome c oxidoreductase, a multisubunit transmembrane complex that is part of the mitochondrial electron transport chain which drives oxidative phosphorylation. The respiratory chain contains 3 multisubunit complexes succinate dehydrogenase (complex II, CII), ubiquinol-cytochrome c oxidoreductase (cytochrome b-c1 complex, complex III, CIII) and cytochrome c oxidase (complex IV, CIV), that cooperate to transfer electrons derived from NADH and succinate to molecular oxygen, creating an electrochemical gradient over the inner membrane that drives transmembrane transport and the ATP synthase. The cytochrome b-c1 complex catalyzes electron transfer from ubiquinol to cytochrome c, linking this redox reaction to translocation of protons across the mitochondrial inner membrane, with protons being carried across the membrane as hydrogens on the quinol. In the process called Q cycle, 2 protons are consumed from the matrix, 4 protons are released into the intermembrane space and 2 electrons are passed to cytochrome c. Cytochrome c1 is a catalytic core subunit containing a c-type heme. It transfers electrons from the [2Fe-2S] iron-sulfur cluster of the Rieske protein to cytochrome c. This is Cytochrome c1 2, heme protein, mitochondrial (CYC1-2) from Arabidopsis thaliana (Mouse-ear cress).